We begin with the raw amino-acid sequence, 456 residues long: Bifunctional protein GlmU (456 aa).

Residues 1–229 form a pyrophosphorylase region; the sequence is MLNSAMSVVI…ISETDGVNNR (229 aa). UDP-N-acetyl-alpha-D-glucosamine-binding positions include 11-14, Lys-25, Gln-76, 81-82, 103-105, Gly-140, Glu-154, Asn-169, and Asn-227; these read LAAG, GT, and YGD. Asp-105 is a binding site for Mg(2+). Asn-227 serves as a coordination point for Mg(2+). The linker stretch occupies residues 230-250; it reads LQLSRLERIYQAEQAEKLLLS. The N-acetyltransferase stretch occupies residues 251 to 456; the sequence is GVMLRDPARF…QGWQRPVKKK (206 aa). 2 residues coordinate UDP-N-acetyl-alpha-D-glucosamine: Arg-333 and Lys-351. Residue His-363 is the Proton acceptor of the active site. UDP-N-acetyl-alpha-D-glucosamine contacts are provided by Tyr-366 and Asn-377. Residues Ala-380, 386-387, Ser-405, Ala-423, and Arg-440 contribute to the acetyl-CoA site; that span reads NY.

In the N-terminal section; belongs to the N-acetylglucosamine-1-phosphate uridyltransferase family. It in the C-terminal section; belongs to the transferase hexapeptide repeat family. Homotrimer. It depends on Mg(2+) as a cofactor.

The protein resides in the cytoplasm. The enzyme catalyses alpha-D-glucosamine 1-phosphate + acetyl-CoA = N-acetyl-alpha-D-glucosamine 1-phosphate + CoA + H(+). The catalysed reaction is N-acetyl-alpha-D-glucosamine 1-phosphate + UTP + H(+) = UDP-N-acetyl-alpha-D-glucosamine + diphosphate. It participates in nucleotide-sugar biosynthesis; UDP-N-acetyl-alpha-D-glucosamine biosynthesis; N-acetyl-alpha-D-glucosamine 1-phosphate from alpha-D-glucosamine 6-phosphate (route II): step 2/2. Its pathway is nucleotide-sugar biosynthesis; UDP-N-acetyl-alpha-D-glucosamine biosynthesis; UDP-N-acetyl-alpha-D-glucosamine from N-acetyl-alpha-D-glucosamine 1-phosphate: step 1/1. The protein operates within bacterial outer membrane biogenesis; LPS lipid A biosynthesis. Its function is as follows. Catalyzes the last two sequential reactions in the de novo biosynthetic pathway for UDP-N-acetylglucosamine (UDP-GlcNAc). The C-terminal domain catalyzes the transfer of acetyl group from acetyl coenzyme A to glucosamine-1-phosphate (GlcN-1-P) to produce N-acetylglucosamine-1-phosphate (GlcNAc-1-P), which is converted into UDP-GlcNAc by the transfer of uridine 5-monophosphate (from uridine 5-triphosphate), a reaction catalyzed by the N-terminal domain. This chain is Bifunctional protein GlmU, found in Salmonella agona (strain SL483).